Consider the following 634-residue polypeptide: 1-deoxy-D-xylulose-5-phosphate synthase (634 aa).

Thiamine diphosphate is bound by residues histidine 74 and 115-117 (AHS). Position 146 (aspartate 146) interacts with Mg(2+). Residues 147 to 148 (GA), asparagine 176, tyrosine 283, and glutamate 365 each bind thiamine diphosphate. Asparagine 176 is a binding site for Mg(2+).

It belongs to the transketolase family. DXPS subfamily. In terms of assembly, homodimer. Mg(2+) serves as cofactor. Requires thiamine diphosphate as cofactor.

The enzyme catalyses D-glyceraldehyde 3-phosphate + pyruvate + H(+) = 1-deoxy-D-xylulose 5-phosphate + CO2. The protein operates within metabolic intermediate biosynthesis; 1-deoxy-D-xylulose 5-phosphate biosynthesis; 1-deoxy-D-xylulose 5-phosphate from D-glyceraldehyde 3-phosphate and pyruvate: step 1/1. Functionally, catalyzes the acyloin condensation reaction between C atoms 2 and 3 of pyruvate and glyceraldehyde 3-phosphate to yield 1-deoxy-D-xylulose-5-phosphate (DXP). In Burkholderia lata (strain ATCC 17760 / DSM 23089 / LMG 22485 / NCIMB 9086 / R18194 / 383), this protein is 1-deoxy-D-xylulose-5-phosphate synthase.